A 433-amino-acid polypeptide reads, in one-letter code: Ribonuclease T2-like (433 aa).

4 disulfide bridges follow: C28–C47, C36–C95, C46–C171, and C103–C163. 2 N-linked (GlcNAc...) asparagine glycosylation sites follow: N38 and N71. Catalysis depends on residues H88, E156, and H160. N-linked (GlcNAc...) asparagine glycosylation is found at N221 and N263. C247 and C283 are joined by a disulfide.

Belongs to the RNase T2 family.

The protein resides in the vacuole lumen. It localises to the cytoplasm. It catalyses the reaction a ribonucleotidyl-ribonucleotide-RNA + H2O = a 3'-end 3'-phospho-ribonucleotide-RNA + a 5'-end dephospho-ribonucleoside-RNA + H(+). Functionally, rnase which modulates cell survival under stress conditions. Released from the vacuole to the cytoplasm during stress to promote tRNA and rRNA cleavage and to activate separately a downstream pathway that promotes cell death. Involved in cell size, vacuolar morphology and growth at high temperatures and high salt concentration. The polypeptide is Ribonuclease T2-like (RNY1) (Candida glabrata (strain ATCC 2001 / BCRC 20586 / JCM 3761 / NBRC 0622 / NRRL Y-65 / CBS 138) (Yeast)).